The chain runs to 444 residues: MARAGQAVDPSPLGQPLEFHFARRSAPNRFLKAGMSERMCSWTEENPSARGIPSRELIETYRTWGRGNIGAIVTGNVMIDPNHIEAEGNPTIPPNALFSGERFDQFANLAAAARANGSLILAQISHPGRQTPSHRQPEPISASDVPLDTENMGNTFAVPRAATENEIKNIITGFAHAAEFLDRAGYDGVELHAAHGYLLNQFLSRATNLRTDKYGGTLTNRMRLILEIRAAITEKVRPGFIVGIKINSVEFQPNGIVPDEACELCCALEEHRFDFVELSGGKYKNLEEDDNAKHIISKRHEAFFLDVAQKVVSSLTKMKSYLTGGFRSTAGMVDGLQTVDGIGLARPFCQEPYLCHDILRGKIPGAIIPVMDQLNYQLTVAAACIQMRQIGNKVQPVDLSSQDAVDAITAAAEGWLKRKAIDRSEEAFKPPLLSGDAAPLSVEA.

Residues Glu37–Cys40 and Gln123 each bind FMN. Residues Pro127 to Thr149 are disordered. His192–His195 provides a ligand contact to substrate. Position 345–346 (Ala345–Arg346) interacts with FMN.

It belongs to the NADH:flavin oxidoreductase/NADH oxidase family.

Its subcellular location is the cytoplasm. It localises to the cytosol. In terms of biological role, NADH-dependent flavin oxidoreductase; part of the gene cluster that mediates the biosynthesis of aflatoxins, a group of polyketide-derived furanocoumarins, and part of the most toxic and carcinogenic compounds among the known mycotoxins. The four major aflatoxins produced by A.parasiticus are aflatoxin B1 (AFB1), aflatoxin B2 (AFB2), aflatoxin G1 (AFG1) and aflatoxin G2 (AFG2). Within the aflatoxin pathway, the NADH-dependent flavin oxidoreductase nadA is specifically required for the last steps in which OMST is converted specifically to aflatoxin G1. The biosynthesis of aflatoxins begins with the norsolorinic acid synthase aflC that combines a hexanoyl starter unit produced by the fatty acid synthase aflA/aflB and 7 malonyl-CoA extender units to synthesize the precursor NOR. The second step is the conversion of NOR to averantin and requires the norsolorinic acid ketoreductase aflD, which catalyzes the dehydration of norsolorinic acid to form (1'S)-averantin. The norsolorinic acid reductases aflE and aflF may also play a role in the conversion of NOR to AVN. The cytochrome P450 monooxygenase aflG then catalyzes the hydroxylation of AVN to 5'hydroxyaverantin (HAVN). The next step is performed by the 5'-hydroxyaverantin dehydrogenase aflH that transforms HAVN to 5'-oxoaverantin (OAVN) which is further converted to averufin (AVF) by aflK that plays a dual role in the pathway, as a 5'-oxoaverantin cyclase that mediates conversion of 5'-oxoaverantin, as well as a versicolorin B synthase in a later step in the pathway. The averufin oxidase aflI catalyzes the conversion of AVF to versiconal hemiacetal acetate (VHA). VHA is then the substrate for the versiconal hemiacetal acetate esterase aflJ to yield versiconal (VAL). Versicolorin B synthase aflK then converts VAL to versicolorin B (VERB) by closing the bisfuran ring of aflatoxin which is required for DNA-binding, thus giving to aflatoxin its activity as a mutagen. Then, the activity of the versicolorin B desaturase aflL leads to versicolorin A (VERA). A branch point starts from VERB since it can also be converted to dihydrodemethylsterigmatocystin (DMDHST), probably also by aflL, VERA being a precursor for aflatoxins B1 and G1, and DMDHST for aflatoxins B2 and G2. Next, the versicolorin reductase aflM and the cytochrome P450 monooxygenase aflN are involved in conversion of VERA to demethylsterigmatocystin (DMST). AflX and aflY seem also involved in this step, through probable aflX-mediated epoxide ring-opening step following versicolorin A oxidation and aflY-mediated Baeyer-Villiger oxidation required for the formation of the xanthone ring. The methyltransferase aflO then leads to the modification of DMST to sterigmatocystin (ST), and of DMDHST to dihydrosterigmatocystin (DHST). Both ST and DHST are then substrates of the O-methyltransferase aflP to yield O-methylsterigmatocystin (OMST) and dihydro-O-methylsterigmatocystin (DHOMST), respectively. Finally OMST is converted to aflatoxins B1 and G1, and DHOMST to aflatoxins B2 and G2, via the action of several enzymes including O-methylsterigmatocystin oxidoreductase aflQ, the cytochrome P450 monooxygenase aflU, but also the NADH-dependent flavin oxidoreductase nadA which is specifically required for the synthesis of AFG1. This is NADH-dependent flavin oxidoreductase nadA from Aspergillus parasiticus (strain ATCC 56775 / NRRL 5862 / SRRC 143 / SU-1).